A 332-amino-acid chain; its full sequence is tRNA dimethylallyltransferase (332 aa).

An ATP-binding site is contributed by 17-24; the sequence is GPTCSGKS. 19–24 is a substrate binding site; it reads TCSGKS. Interaction with substrate tRNA stretches follow at residues 42–45 and 166–170; these read DSMQ and QRISR.

This sequence belongs to the IPP transferase family. Monomer. Mg(2+) is required as a cofactor.

The enzyme catalyses adenosine(37) in tRNA + dimethylallyl diphosphate = N(6)-dimethylallyladenosine(37) in tRNA + diphosphate. Its function is as follows. Catalyzes the transfer of a dimethylallyl group onto the adenine at position 37 in tRNAs that read codons beginning with uridine, leading to the formation of N6-(dimethylallyl)adenosine (i(6)A). This chain is tRNA dimethylallyltransferase, found in Gluconobacter oxydans (strain 621H) (Gluconobacter suboxydans).